Reading from the N-terminus, the 361-residue chain is UDP-N-acetylglucosamine--N-acetylmuramyl-(pentapeptide) pyrophosphoryl-undecaprenol N-acetylglucosamine transferase (361 aa).

UDP-N-acetyl-alpha-D-glucosamine is bound by residues 13 to 15, Asn125, Arg167, Ser196, Ile251, 270 to 275, and Gln296; these read TGG and ALTVTE.

It belongs to the glycosyltransferase 28 family. MurG subfamily.

It is found in the cell inner membrane. It catalyses the reaction di-trans,octa-cis-undecaprenyl diphospho-N-acetyl-alpha-D-muramoyl-L-alanyl-D-glutamyl-meso-2,6-diaminopimeloyl-D-alanyl-D-alanine + UDP-N-acetyl-alpha-D-glucosamine = di-trans,octa-cis-undecaprenyl diphospho-[N-acetyl-alpha-D-glucosaminyl-(1-&gt;4)]-N-acetyl-alpha-D-muramoyl-L-alanyl-D-glutamyl-meso-2,6-diaminopimeloyl-D-alanyl-D-alanine + UDP + H(+). It functions in the pathway cell wall biogenesis; peptidoglycan biosynthesis. Functionally, cell wall formation. Catalyzes the transfer of a GlcNAc subunit on undecaprenyl-pyrophosphoryl-MurNAc-pentapeptide (lipid intermediate I) to form undecaprenyl-pyrophosphoryl-MurNAc-(pentapeptide)GlcNAc (lipid intermediate II). This Psychrobacter arcticus (strain DSM 17307 / VKM B-2377 / 273-4) protein is UDP-N-acetylglucosamine--N-acetylmuramyl-(pentapeptide) pyrophosphoryl-undecaprenol N-acetylglucosamine transferase.